The primary structure comprises 105 residues: Urease subunit beta (105 aa).

The protein belongs to the urease beta subunit family. As to quaternary structure, heterotrimer of UreA (gamma), UreB (beta) and UreC (alpha) subunits. Three heterotrimers associate to form the active enzyme.

It is found in the cytoplasm. It catalyses the reaction urea + 2 H2O + H(+) = hydrogencarbonate + 2 NH4(+). The protein operates within nitrogen metabolism; urea degradation; CO(2) and NH(3) from urea (urease route): step 1/1. The chain is Urease subunit beta from Marinobacter nauticus (strain ATCC 700491 / DSM 11845 / VT8) (Marinobacter aquaeolei).